The sequence spans 192 residues: Ion-translocating oxidoreductase complex subunit A (192 aa).

The next 6 helical transmembrane spans lie at 5 to 25 (ILLL…FLGL), 39 to 59 (IGMG…AYLV), 72 to 92 (LRTM…EMVV), 102 to 122 (LLGI…VALL), 134 to 154 (IIYG…FASM), and 171 to 191 (SIAM…TGLV).

This sequence belongs to the NqrDE/RnfAE family. As to quaternary structure, the complex is composed of six subunits: RnfA, RnfB, RnfC, RnfD, RnfE and RnfG.

Its subcellular location is the cell inner membrane. Part of a membrane-bound complex that couples electron transfer with translocation of ions across the membrane. This Vibrio vulnificus (strain CMCP6) protein is Ion-translocating oxidoreductase complex subunit A.